A 122-amino-acid polypeptide reads, in one-letter code: Histone H2B, gonadal (122 aa).

Positions 1 to 31 are disordered; sequence MPPKVSSKGAKKAGKAKAARSGDKKRKRRRK. Basic residues predominate over residues 9 to 31; that stretch reads GAKKAGKAKAARSGDKKRKRRRK. The O-linked (GlcNAc) serine glycan is linked to serine 109. Lysine 117 participates in a covalent cross-link: Glycyl lysine isopeptide (Lys-Gly) (interchain with G-Cter in ubiquitin).

The protein belongs to the histone H2B family. As to quaternary structure, the nucleosome is a histone octamer containing two molecules each of H2A, H2B, H3 and H4 assembled in one H3-H4 heterotetramer and two H2A-H2B heterodimers. The octamer wraps approximately 147 bp of DNA. Post-translationally, monoubiquitination of Lys-117 gives a specific tag for epigenetic transcriptional activation and is also prerequisite for histone H3 'Lys-4' and 'Lys-79' methylation. GlcNAcylation at Ser-109 promotes monoubiquitination of Lys-117. It fluctuates in response to extracellular glucose, and associates with transcribed genes.

It is found in the nucleus. The protein localises to the chromosome. Its function is as follows. Core component of nucleosome. Nucleosomes wrap and compact DNA into chromatin, limiting DNA accessibility to the cellular machineries which require DNA as a template. Histones thereby play a central role in transcription regulation, DNA repair, DNA replication and chromosomal stability. DNA accessibility is regulated via a complex set of post-translational modifications of histones, also called histone code, and nucleosome remodeling. The sequence is that of Histone H2B, gonadal from Patella granatina (Sandpaper limpet).